Reading from the N-terminus, the 239-residue chain is Tumor necrosis factor ligand superfamily member 8 (239 aa).

The disordered stretch occupies residues 1–36 (MEPGLQQAGSCGAPSPDPAMQVQPGSVASPWRSTRP). The Cytoplasmic segment spans residues 1–43 (MEPGLQQAGSCGAPSPDPAMQVQPGSVASPWRSTRPWRSTSRS). The chain crosses the membrane as a helical; Signal-anchor for type II membrane protein span at residues 44 to 67 (YFYLSTTALVCLVVAVAIILVLVV). Topologically, residues 68–239 (QKKDSTPNTT…LSVFLYSSSD (172 aa)) are extracellular. N-linked (GlcNAc...) asparagine glycans are attached at residues Asn-75, Asn-86, Asn-114, Asn-158, Asn-194, and Asn-206. The region spanning 103–230 (SWAYLQVSKH…TNTFPLDNVL (128 aa)) is the THD domain. An intrachain disulfide couples Cys-156 to Cys-182.

It belongs to the tumor necrosis factor family. In terms of assembly, homotrimer.

It is found in the membrane. Functionally, cytokine that binds to TNFRSF8/CD30. Induces proliferation of T-cells. The chain is Tumor necrosis factor ligand superfamily member 8 (Tnfsf8) from Mus musculus (Mouse).